The sequence spans 328 residues: Phosphate acyltransferase (328 aa).

It belongs to the PlsX family. Homodimer. Probably interacts with PlsY.

The protein resides in the cytoplasm. The catalysed reaction is a fatty acyl-[ACP] + phosphate = an acyl phosphate + holo-[ACP]. It participates in lipid metabolism; phospholipid metabolism. Catalyzes the reversible formation of acyl-phosphate (acyl-PO(4)) from acyl-[acyl-carrier-protein] (acyl-ACP). This enzyme utilizes acyl-ACP as fatty acyl donor, but not acyl-CoA. This is Phosphate acyltransferase from Staphylococcus aureus (strain bovine RF122 / ET3-1).